The sequence spans 217 residues: Thymidylate kinase (217 aa).

7–14 is an ATP binding site; it reads GIEGAGKS.

It belongs to the thymidylate kinase family.

The enzyme catalyses dTMP + ATP = dTDP + ADP. Functionally, phosphorylation of dTMP to form dTDP in both de novo and salvage pathways of dTTP synthesis. The sequence is that of Thymidylate kinase from Desulfovibrio desulfuricans (strain ATCC 27774 / DSM 6949 / MB).